A 291-amino-acid polypeptide reads, in one-letter code: Mitochondrial thiamine pyrophosphate carrier 1 (291 aa).

Transmembrane regions (helical) follow at residues 12–31, 83–99, 120–141, 167–191, 214–230, and 265–282; these read GATA…GAVA, IMYI…YSMF, SLIV…FDLL, GGLA…GLMF, FCGF…TFPL, and GFGI…VSLF. 3 Solcar repeats span residues 15–102, 115–200, and 207–290; these read ASVY…FSKA, RPSN…AREV, and NIPF…VLNG.

This sequence belongs to the mitochondrial carrier (TC 2.A.29) family.

It is found in the mitochondrion inner membrane. In terms of biological role, mitochondrial transporter that mediates uptake of thiamine pyrophosphate (ThPP) into mitochondria. The polypeptide is Mitochondrial thiamine pyrophosphate carrier 1 (TPC1) (Meyerozyma guilliermondii (strain ATCC 6260 / CBS 566 / DSM 6381 / JCM 1539 / NBRC 10279 / NRRL Y-324) (Yeast)).